The chain runs to 415 residues: Carboxypeptidase G2 (415 aa).

An N-terminal signal peptide occupies residues 1 to 22 (MRPSIHRTAIAAVLATAFVAGT). His-112 is a binding site for Zn(2+). Asp-114 is an active-site residue. Asp-141 provides a ligand contact to Zn(2+). The active-site Proton acceptor is the Glu-175. 3 residues coordinate Zn(2+): Glu-176, Glu-200, and His-385.

It belongs to the peptidase M20A family. As to quaternary structure, homodimer. The cofactor is Zn(2+).

It catalyses the reaction Release of C-terminal glutamate residues from a wide range of N-acylating moieties, including peptidyl, aminoacyl, benzoyl, benzyloxycarbonyl, folyl and pteroyl groups.. Functionally, catalyzes the hydrolysis of reduced and non-reduced folates to pteroates and L-glutamate. This enzyme has a broad specificity. The chain is Carboxypeptidase G2 (cpg2) from Pseudomonas sp. (strain RS-16).